Reading from the N-terminus, the 297-residue chain is Phosphatidylglycerol--prolipoprotein diacylglyceryl transferase (297 aa).

4 helical membrane-spanning segments follow: residues 20–40 (FITIRWYGLLISVSVLIGLFI), 57–77 (EILPSLIIFSIIGARAYYVIF), 107–127 (WEGGIAIHGGLIGGLISIIFF), and 133–153 (IHLKTFIDILIPSIILGQSIG). Arg154 serves as a coordination point for a 1,2-diacyl-sn-glycero-3-phospho-(1'-sn-glycerol). 3 consecutive transmembrane segments (helical) span residues 193-213 (PTFLYESLWNLLVFIFLILIF), 225-245 (GFISCLYLICYSFGRFWIEGL), and 266-286 (AQFISIFLFSSGLIGIFFLRL).

This sequence belongs to the Lgt family.

The protein localises to the cell inner membrane. It catalyses the reaction L-cysteinyl-[prolipoprotein] + a 1,2-diacyl-sn-glycero-3-phospho-(1'-sn-glycerol) = an S-1,2-diacyl-sn-glyceryl-L-cysteinyl-[prolipoprotein] + sn-glycerol 1-phosphate + H(+). The protein operates within protein modification; lipoprotein biosynthesis (diacylglyceryl transfer). Its function is as follows. Catalyzes the transfer of the diacylglyceryl group from phosphatidylglycerol to the sulfhydryl group of the N-terminal cysteine of a prolipoprotein, the first step in the formation of mature lipoproteins. This is Phosphatidylglycerol--prolipoprotein diacylglyceryl transferase from Prochlorococcus marinus (strain MIT 9301).